A 173-amino-acid chain; its full sequence is Protein-export protein SecB 1 (173 aa).

It belongs to the SecB family. Homotetramer, a dimer of dimers. One homotetramer interacts with 1 SecA dimer.

Its subcellular location is the cytoplasm. In terms of biological role, one of the proteins required for the normal export of preproteins out of the cell cytoplasm. It is a molecular chaperone that binds to a subset of precursor proteins, maintaining them in a translocation-competent state. It also specifically binds to its receptor SecA. This Gluconobacter oxydans (strain 621H) (Gluconobacter suboxydans) protein is Protein-export protein SecB 1.